A 764-amino-acid chain; its full sequence is 5-methyltetrahydropteroyltriglutamate--homocysteine methyltransferase (764 aa).

Residues Arg-16–Lys-19 and Lys-112 each bind 5-methyltetrahydropteroyltri-L-glutamate. L-homocysteine contacts are provided by residues Ile-431 to Ser-433 and Glu-484. L-methionine is bound by residues Ile-431–Ser-433 and Glu-484. 5-methyltetrahydropteroyltri-L-glutamate-binding positions include Arg-515–Cys-516 and Trp-561. Asp-599 lines the L-homocysteine pocket. Asp-599 is an L-methionine binding site. Glu-605 provides a ligand contact to 5-methyltetrahydropteroyltri-L-glutamate. Zn(2+)-binding residues include His-641, Cys-643, and Glu-665. His-694 acts as the Proton donor in catalysis. Zn(2+) is bound at residue Cys-726.

This sequence belongs to the vitamin-B12 independent methionine synthase family. It depends on Zn(2+) as a cofactor.

The enzyme catalyses 5-methyltetrahydropteroyltri-L-glutamate + L-homocysteine = tetrahydropteroyltri-L-glutamate + L-methionine. Its pathway is amino-acid biosynthesis; L-methionine biosynthesis via de novo pathway; L-methionine from L-homocysteine (MetE route): step 1/1. Its function is as follows. Catalyzes the transfer of a methyl group from 5-methyltetrahydrofolate to homocysteine resulting in methionine formation. This is 5-methyltetrahydropteroyltriglutamate--homocysteine methyltransferase from Paraburkholderia phytofirmans (strain DSM 17436 / LMG 22146 / PsJN) (Burkholderia phytofirmans).